A 435-amino-acid polypeptide reads, in one-letter code: ATP-dependent protease ATPase subunit HslU (435 aa).

ATP contacts are provided by residues Val-18, 60–65, Asp-248, Glu-313, and Arg-385; that span reads GCGKTE.

This sequence belongs to the ClpX chaperone family. HslU subfamily. A double ring-shaped homohexamer of HslV is capped on each side by a ring-shaped HslU homohexamer. The assembly of the HslU/HslV complex is dependent on binding of ATP.

The protein resides in the cytoplasm. Functionally, ATPase subunit of a proteasome-like degradation complex; this subunit has chaperone activity. The binding of ATP and its subsequent hydrolysis by HslU are essential for unfolding of protein substrates subsequently hydrolyzed by HslV. HslU recognizes the N-terminal part of its protein substrates and unfolds these before they are guided to HslV for hydrolysis. This chain is ATP-dependent protease ATPase subunit HslU, found in Beijerinckia indica subsp. indica (strain ATCC 9039 / DSM 1715 / NCIMB 8712).